We begin with the raw amino-acid sequence, 217 residues long: 3-demethoxyubiquinol 3-hydroxylase (217 aa).

Fe cation-binding residues include Glu66, Glu96, His99, Glu148, Glu180, and His183.

Belongs to the COQ7 family. Requires Fe cation as cofactor.

The protein resides in the cell membrane. It catalyses the reaction a 5-methoxy-2-methyl-3-(all-trans-polyprenyl)benzene-1,4-diol + AH2 + O2 = a 3-demethylubiquinol + A + H2O. The protein operates within cofactor biosynthesis; ubiquinone biosynthesis. Its function is as follows. Catalyzes the hydroxylation of 2-nonaprenyl-3-methyl-6-methoxy-1,4-benzoquinol during ubiquinone biosynthesis. The chain is 3-demethoxyubiquinol 3-hydroxylase from Xylella fastidiosa (strain Temecula1 / ATCC 700964).